Here is a 521-residue protein sequence, read N- to C-terminus: Phospholipase C B (521 aa).

The segment at residues 1–39 (MGSEHPVDGMTRRQFFAKAAAATTAGAFMSLAGPIIEKA) is a signal peptide (tat-type signal). The tract at residues 501–521 (FPQSMPTQETAPTRGIPSGLC) is disordered.

Belongs to the bacterial phospholipase C family. In terms of processing, predicted to be exported by the Tat system. The position of the signal peptide cleavage has not been experimentally proven.

The protein localises to the secreted. It is found in the cell wall. The catalysed reaction is a 1,2-diacyl-sn-glycero-3-phosphocholine + H2O = phosphocholine + a 1,2-diacyl-sn-glycerol + H(+). In terms of biological role, involved in virulence. Induces cytotoxic effects on mouse macrophage cell lines, via direct or indirect enzymatic hydrolysis of cell membrane phospholipids. Hydrolyzes phosphatidylcholine. The sequence is that of Phospholipase C B from Mycobacterium tuberculosis (strain CDC 1551 / Oshkosh).